The primary structure comprises 321 residues: Annexin A5 (321 aa).

Ala2 bears the N-acetylalanine mark. 4 Annexin repeats span residues 15 to 86 (FDER…ALMK), 87 to 158 (PSRL…VLLQ), 170 to 242 (AQVE…AVVK), and 246 to 317 (SIPA…LLCG). Lys29 is covalently cross-linked (Glycyl lysine isopeptide (Lys-Gly) (interchain with G-Cter in SUMO1); alternate). Lys29 is covalently cross-linked (Glycyl lysine isopeptide (Lys-Gly) (interchain with G-Cter in SUMO2); alternate). An N6-acetyllysine mark is found at Lys70, Lys76, Lys79, Lys97, and Lys101. Lys290 bears the N6-succinyllysine mark. The [IL]-x-C-x-x-[DE] motif motif lies at 314–320 (LLCGGED).

Belongs to the annexin family. Monomer. Binds ATRX and EIF5B. In terms of processing, S-nitrosylation is induced by interferon-gamma and oxidatively-modified low-densitity lipoprotein (LDL(ox)) possibly implicating the iNOS-S100A8/9 transnitrosylase complex.

Its function is as follows. This protein is an anticoagulant protein that acts as an indirect inhibitor of the thromboplastin-specific complex, which is involved in the blood coagulation cascade. The sequence is that of Annexin A5 (ANXA5) from Bos taurus (Bovine).